A 61-amino-acid chain; its full sequence is Small ribosomal subunit protein uS14 (61 aa).

Residues cysteine 24, cysteine 27, cysteine 40, and cysteine 43 each contribute to the Zn(2+) site.

Belongs to the universal ribosomal protein uS14 family. Zinc-binding uS14 subfamily. As to quaternary structure, part of the 30S ribosomal subunit. Contacts proteins S3 and S10. Requires Zn(2+) as cofactor.

Functionally, binds 16S rRNA, required for the assembly of 30S particles and may also be responsible for determining the conformation of the 16S rRNA at the A site. This is Small ribosomal subunit protein uS14 from Campylobacter lari (strain RM2100 / D67 / ATCC BAA-1060).